A 497-amino-acid chain; its full sequence is Casein kinase I isoform delta (497 aa).

Disordered stretches follow at residues 1-58 (MATM…EEMN) and 86-109 (PIQQ…HPTQ). Over residues 14–34 (WHNNTSTPMDTTEPATNSHNP) the composition is skewed to polar residues. Residues 88 to 105 (QQHQQPPLLQQAQPSQIP) show a composition bias toward low complexity. The Protein kinase domain maps to 191 to 458 (FRLGRKIGSG…YLRNLFRTLF (268 aa)). Residues 197–205 (IGSGSFGDI) and K220 each bind ATP. Catalysis depends on D310, which acts as the Proton acceptor.

Belongs to the protein kinase superfamily. CK1 Ser/Thr protein kinase family. Casein kinase I subfamily. In terms of assembly, monomer. As to expression, expressed throughout larval development and into the adult stage in both hypodermal seam cells and the hermaphrodite specific neuron.

The protein resides in the cytoplasm. The protein localises to the nucleus. Its subcellular location is the chromosome. It localises to the centromere. It is found in the cell junction. The protein resides in the adherens junction. It carries out the reaction L-seryl-[protein] + ATP = O-phospho-L-seryl-[protein] + ADP + H(+). The catalysed reaction is L-threonyl-[protein] + ATP = O-phospho-L-threonyl-[protein] + ADP + H(+). Exhibits substrate-dependent heparin activation. In terms of biological role, essential serine/threonine-protein kinase that regulates diverse cellular growth and survival processes including Wnt signaling, DNA repair and circadian rhythms. Casein kinases are operationally defined by their preferential utilization of acidic proteins. Positively regulates the expression of components of the heterochronic pathway, which regulate developmental timing, such as the transcriptional repressor lin-42 and microRNAs such as let-7. Negatively regulates cell cycle exit and cell fusion to prevent the premature differentiation of hypodermal seam cells into adult cells. Plays a role in regulating axon branching and subsequently, the maturation of the nervous system, most likely by preventing the premature termination of transcripts for proteins such as Ankyrin/unc-44, which are required for maintaining the nervous system. May phosphorylate ssup-72 to promote nervous system maturation. This is Casein kinase I isoform delta from Caenorhabditis elegans.